The following is a 625-amino-acid chain: uncharacterized protein (625 aa).

Positions 23–51 (CLACRRKKLKCDHGRPCSNCLKRSTIQSC) form a DNA-binding region, zn(2)-C6 fungal-type. Residues 93-113 (GTKSQSDYENQQSHNLPSTPS) show a composition bias toward polar residues. The tract at residues 93–119 (GTKSQSDYENQQSHNLPSTPSADAETQ) is disordered.

It localises to the nucleus. It is found in the cytoplasm. Its subcellular location is the cytoskeleton. The protein resides in the spindle. This is an uncharacterized protein from Schizosaccharomyces pombe (strain 972 / ATCC 24843) (Fission yeast).